Here is a 287-residue protein sequence, read N- to C-terminus: RxLR effector protein Avr4 (287 aa).

Residues 1-24 (MRSLHILLVFTASLLASLTESAKA) form the signal peptide. The RxLR-dEER motif lies at 42-55 (RFLRAQTDEKNEER). Positions 115–138 (KYERMQWQKLKEGETLTFMRLGDR) are W1 motif. Positions 148–171 (QLLRWVAQKKPVESVYDDLQVAGF) are W2 motif. Residues 221-244 (LFEKWAMEGTHIKSVITTLKLNGK) are W3 motif. The interval 246–267 (ASEMANNENFPALLKYVKLYLD) is y motif.

This sequence belongs to the RxLR effector family.

It localises to the secreted. It is found in the host cytoplasm. The protein resides in the host nucleus. Its subcellular location is the host nucleolus. The protein localises to the host cytoskeleton. Its function is as follows. Secreted effector that acts as an elicitor of hypersensitive response (HR) specifically on plants carrying defense protein R4, through its interaction with this protein. This Phytophthora infestans (strain T30-4) (Potato late blight agent) protein is RxLR effector protein Avr4.